Here is a 142-residue protein sequence, read N- to C-terminus: Hemoglobin subunit beta-C (142 aa).

Residues 1–142 form the Globin domain; that stretch reads MPNKALITGF…VASALAHRYH (142 aa). Residues histidine 59 and histidine 88 each coordinate heme b.

The protein belongs to the globin family. In terms of assembly, heterotetramer of two alpha chains and two beta chains. As to expression, red blood cells.

In terms of biological role, involved in oxygen transport from the lung to the various peripheral tissues. The sequence is that of Hemoglobin subunit beta-C (HBBC) from Capra hircus (Goat).